The chain runs to 383 residues: Succinyl-diaminopimelate desuccinylase (383 aa).

Residue H69 coordinates Zn(2+). The active site involves D71. A Zn(2+)-binding site is contributed by D103. E137 functions as the Proton acceptor in the catalytic mechanism. E138, E166, and H357 together coordinate Zn(2+).

It belongs to the peptidase M20A family. DapE subfamily. As to quaternary structure, homodimer. It depends on Zn(2+) as a cofactor. Co(2+) serves as cofactor.

It carries out the reaction N-succinyl-(2S,6S)-2,6-diaminopimelate + H2O = (2S,6S)-2,6-diaminopimelate + succinate. It participates in amino-acid biosynthesis; L-lysine biosynthesis via DAP pathway; LL-2,6-diaminopimelate from (S)-tetrahydrodipicolinate (succinylase route): step 3/3. Its function is as follows. Catalyzes the hydrolysis of N-succinyl-L,L-diaminopimelic acid (SDAP), forming succinate and LL-2,6-diaminopimelate (DAP), an intermediate involved in the bacterial biosynthesis of lysine and meso-diaminopimelic acid, an essential component of bacterial cell walls. In Rickettsia prowazekii (strain Madrid E), this protein is Succinyl-diaminopimelate desuccinylase.